We begin with the raw amino-acid sequence, 500 residues long: Cytochrome P450 71B9 (500 aa).

A helical transmembrane segment spans residues methionine 1 to lysine 21. Cysteine 440 serves as a coordination point for heme.

This sequence belongs to the cytochrome P450 family. Heme serves as cofactor.

Its subcellular location is the membrane. The protein is Cytochrome P450 71B9 (CYP71B9) of Arabidopsis thaliana (Mouse-ear cress).